The chain runs to 414 residues: Ornithine aminotransferase (414 aa).

An intrachain disulfide couples Cys-154 to Cys-163. Position 262 is an N6-(pyridoxal phosphate)lysine (Lys-262).

The protein belongs to the class-III pyridoxal-phosphate-dependent aminotransferase family. In terms of assembly, homodimer. The cofactor is pyridoxal 5'-phosphate. Post-translationally, the disulfide bond between Cys-154 and Cys-163 is reduced by TRX1 which increases OAT catalytic activity.

The protein localises to the cytoplasm. It carries out the reaction a 2-oxocarboxylate + L-ornithine = L-glutamate 5-semialdehyde + an L-alpha-amino acid. The catalysed reaction is L-ornithine + 2-oxoglutarate = L-glutamate 5-semialdehyde + L-glutamate. It participates in amino-acid biosynthesis; L-proline biosynthesis; L-glutamate 5-semialdehyde from L-ornithine: step 1/1. With respect to regulation, unlike for mammalian OATs, activity is increased by TRX1-mediated reduction of the disulfide bond between Cys-154 and Cys-163. Binding to TRX1 may also induce conformational changes that facilitate substrate binding. Catalyzes the transamination of alpha-ketoglutarate with ornithine or N-acetylornithine and of glutamate-5-semialdehyde with glutamate and alanine. This Plasmodium yoelii yoelii protein is Ornithine aminotransferase.